Consider the following 41-residue polypeptide: Large ribosomal subunit protein bL36 (41 aa).

It belongs to the bacterial ribosomal protein bL36 family.

The chain is Large ribosomal subunit protein bL36 from Neisseria gonorrhoeae (strain ATCC 700825 / FA 1090).